A 651-amino-acid polypeptide reads, in one-letter code: ATP-dependent zinc metalloprotease FtsH (651 aa).

At 1–134 the chain is on the extracellular side; the sequence is MIVFATILFG…FTTDPQTAGP (134 aa). Residues 135–155 traverse the membrane as a helical segment; that stretch reads WARAIAVMAPFVLILLLFFLM. Residues 156–651 lie on the Cytoplasmic side of the membrane; sequence TRTGRSASQS…PAMSVNGHRG (496 aa). Position 229–236 (229–236) interacts with ATP; that stretch reads GPPGTGKT. Histidine 451 lines the Zn(2+) pocket. Residue glutamate 452 is part of the active site. Zn(2+) is bound by residues histidine 455 and aspartate 527.

In the central section; belongs to the AAA ATPase family. The protein in the C-terminal section; belongs to the peptidase M41 family. In terms of assembly, homohexamer. It depends on Zn(2+) as a cofactor.

It is found in the cell membrane. In terms of biological role, acts as a processive, ATP-dependent zinc metallopeptidase for both cytoplasmic and membrane proteins. Plays a role in the quality control of integral membrane proteins. This chain is ATP-dependent zinc metalloprotease FtsH, found in Rubrobacter xylanophilus (strain DSM 9941 / JCM 11954 / NBRC 16129 / PRD-1).